An 846-amino-acid chain; its full sequence is Auxin response factor 2A (846 aa).

Over residues 1–12 (MAASEVSIQGYS) the composition is skewed to polar residues. The disordered stretch occupies residues 1–30 (MAASEVSIQGYSEPSDGSRPVSETGRSSSG). Residues 146-248 (FCKTLTASDT…ELRVGVRRAM (103 aa)) constitute a DNA-binding region (TF-B3). Disordered regions lie at residues 380 to 423 (PPAL…HSQA) and 660 to 693 (DMNI…GVAA). 2 stretches are compositionally biased toward polar residues: residues 398–408 (ILPTSPDSSVL) and 414–423 (SRATADHSQA). Residues 675–693 (SDQRSEQSKGSKVDDGVAA) are compositionally biased toward basic and acidic residues. The region spanning 720 to 804 (RSCTKVHKQG…RKIFIYTKEE (85 aa)) is the PB1 domain. Composition is skewed to polar residues over residues 809–824 (NPGT…SSVA) and 836–846 (QLPSESGQAES). A disordered region spans residues 809–846 (NPGTLNSKGEDTSSVAEGSDAKEVKNLQLPSESGQAES).

It belongs to the ARF family. As to quaternary structure, homodimers and heterodimers. Interacts with ASR1. Expressed in root, leaf and flower. Expressed in flower buds about three days before opening including ovary, petal and sepal with the highest in stamen. Expressed in stem. Expressed in fruit. Expressed in seeds.

Its subcellular location is the nucleus. In terms of biological role, auxin response factors (ARFs) are transcriptional factors that bind specifically to the DNA sequence 5'-TGTCTC-3' found in the auxin-responsive promoter elements (AuxREs). Could act as transcriptional activator or repressor. Involved in the control of fruit ripening process. Regulates expression of a number of ripening regulators, transcription factors, and ethylene biosynthesis and signaling components. May act as a transcriptional repressor of auxin-responsive genes. Regulates vegetative growth, lateral root formation and flower organ senescence, possibly partially by regulating gene expression of auxin and ethylene response factor (ERF) genes. Plays a negative role in axillary shoot meristem formation. The chain is Auxin response factor 2A from Solanum lycopersicum (Tomato).